A 144-amino-acid chain; its full sequence is Apidaecins type 22 (144 aa).

A signal peptide spans M1–G19. Propeptides lie at residues N20–P42, E63–P70, E91–P98, and E119–P126. Residues N20 to I144 form a disordered region. Pro residues predominate over residues I134–I144.

Belongs to the apidaecin family.

The protein localises to the secreted. Apidaecins have bactericidal activity; predominantly against Gram-negative bacteria. They seem to interfere with cell propagation. The polypeptide is Apidaecins type 22 (Apis mellifera (Honeybee)).